Consider the following 168-residue polypeptide: Inorganic pyrophosphatase (168 aa).

Substrate is bound by residues K23, R37, and Y49. Positions 59, 64, and 96 each coordinate Mg(2+). Y133 is a binding site for substrate.

This sequence belongs to the PPase family. Homohexamer. The cofactor is Mg(2+).

Its subcellular location is the cytoplasm. It catalyses the reaction diphosphate + H2O = 2 phosphate + H(+). Catalyzes the hydrolysis of inorganic pyrophosphate (PPi) forming two phosphate ions. The chain is Inorganic pyrophosphatase from Methanosarcina acetivorans (strain ATCC 35395 / DSM 2834 / JCM 12185 / C2A).